Here is a 354-residue protein sequence, read N- to C-terminus: Prephenate dehydrogenase (354 aa).

One can recognise a Prephenate/arogenate dehydrogenase domain in the interval 2 to 283 (KKILIIGLGL…AMEIHKGALP (282 aa)). 3-33 (KILIIGLGLIGSSIALGIKKAHPEFEILGSD) contacts NAD(+). Residues 287–354 (DLFISVPDEK…IEKATDFTVV (68 aa)) enclose the ACT domain.

The protein belongs to the prephenate/arogenate dehydrogenase family.

It catalyses the reaction prephenate + NAD(+) = 3-(4-hydroxyphenyl)pyruvate + CO2 + NADH. It participates in amino-acid biosynthesis; L-tyrosine biosynthesis; (4-hydroxyphenyl)pyruvate from prephenate (NAD(+) route): step 1/1. This chain is Prephenate dehydrogenase (tyrA), found in Lactococcus lactis subsp. cremoris (strain MG1363).